Consider the following 146-residue polypeptide: Ribosome maturation factor RimP (146 aa).

This sequence belongs to the RimP family.

The protein localises to the cytoplasm. Required for maturation of 30S ribosomal subunits. The protein is Ribosome maturation factor RimP of Helicobacter pylori (strain ATCC 700392 / 26695) (Campylobacter pylori).